Reading from the N-terminus, the 307-residue chain is Transmembrane and coiled-coil domain-containing protein 5B (307 aa).

The stretch at 17 to 207 (FASSLEAVKQ…LEKQISKAQD (191 aa)) forms a coiled coil. Residues 243–265 (YFQYLTFMVLVFIRLLAYVIFHL) form a helical membrane-spanning segment.

Belongs to the TMCO5 family.

The protein localises to the membrane. In Homo sapiens (Human), this protein is Transmembrane and coiled-coil domain-containing protein 5B (TMCO5B).